The chain runs to 573 residues: NADP-dependent malic enzyme, chloroplastic (573 aa).

Tyr-123 acts as the Proton donor in catalysis. Arg-176 is an NAD(+) binding site. Lys-194 functions as the Proton acceptor in the catalytic mechanism. A divalent metal cation-binding residues include Glu-265, Asp-266, and Asp-289. Position 289 (Asp-289) interacts with NAD(+). 318–334 (LFLGAGEAGTGIAELIA) lines the NADP(+) pocket. Asn-430 provides a ligand contact to NAD(+).

The protein belongs to the malic enzymes family. As to quaternary structure, homotetramer. Mg(2+) serves as cofactor. Mn(2+) is required as a cofactor.

It localises to the plastid. Its subcellular location is the chloroplast. It carries out the reaction (S)-malate + NADP(+) = pyruvate + CO2 + NADPH. The enzyme catalyses oxaloacetate + H(+) = pyruvate + CO2. It functions in the pathway photosynthesis; C4 acid pathway. The chloroplastic ME isoform decarboxylates malate shuttled from neighboring mesophyll cells. The CO(2) released is then refixed by ribulose-bisphosphate carboxylase. This pathway eliminates the photorespiratory loss of CO(2) that occurs in most plants. The protein is NADP-dependent malic enzyme, chloroplastic of Solanum lycopersicum (Tomato).